The primary structure comprises 395 residues: ATP phosphoribosyltransferase regulatory subunit (395 aa).

It belongs to the class-II aminoacyl-tRNA synthetase family. HisZ subfamily. As to quaternary structure, heteromultimer composed of HisG and HisZ subunits.

It is found in the cytoplasm. The protein operates within amino-acid biosynthesis; L-histidine biosynthesis; L-histidine from 5-phospho-alpha-D-ribose 1-diphosphate: step 1/9. Its function is as follows. Required for the first step of histidine biosynthesis. May allow the feedback regulation of ATP phosphoribosyltransferase activity by histidine. This Pseudomonas putida (strain ATCC 700007 / DSM 6899 / JCM 31910 / BCRC 17059 / LMG 24140 / F1) protein is ATP phosphoribosyltransferase regulatory subunit.